We begin with the raw amino-acid sequence, 321 residues long: Lipoyl synthase (321 aa).

Residues cysteine 68, cysteine 73, cysteine 79, cysteine 94, cysteine 98, cysteine 101, and serine 308 each coordinate [4Fe-4S] cluster. One can recognise a Radical SAM core domain in the interval 80-297 (FNHGTATFMI…KAEAMAMGFT (218 aa)).

The protein belongs to the radical SAM superfamily. Lipoyl synthase family. [4Fe-4S] cluster serves as cofactor.

Its subcellular location is the cytoplasm. It carries out the reaction [[Fe-S] cluster scaffold protein carrying a second [4Fe-4S](2+) cluster] + N(6)-octanoyl-L-lysyl-[protein] + 2 oxidized [2Fe-2S]-[ferredoxin] + 2 S-adenosyl-L-methionine + 4 H(+) = [[Fe-S] cluster scaffold protein] + N(6)-[(R)-dihydrolipoyl]-L-lysyl-[protein] + 4 Fe(3+) + 2 hydrogen sulfide + 2 5'-deoxyadenosine + 2 L-methionine + 2 reduced [2Fe-2S]-[ferredoxin]. The protein operates within protein modification; protein lipoylation via endogenous pathway; protein N(6)-(lipoyl)lysine from octanoyl-[acyl-carrier-protein]: step 2/2. Its function is as follows. Catalyzes the radical-mediated insertion of two sulfur atoms into the C-6 and C-8 positions of the octanoyl moiety bound to the lipoyl domains of lipoate-dependent enzymes, thereby converting the octanoylated domains into lipoylated derivatives. This chain is Lipoyl synthase, found in Enterobacter sp. (strain 638).